The following is a 189-amino-acid chain: Peptidyl-tRNA hydrolase (189 aa).

Tyrosine 18 is a tRNA binding site. Catalysis depends on histidine 23, which acts as the Proton acceptor. Residues phenylalanine 67, asparagine 69, and asparagine 115 each coordinate tRNA.

Belongs to the PTH family. Monomer.

It is found in the cytoplasm. It catalyses the reaction an N-acyl-L-alpha-aminoacyl-tRNA + H2O = an N-acyl-L-amino acid + a tRNA + H(+). Functionally, hydrolyzes ribosome-free peptidyl-tRNAs (with 1 or more amino acids incorporated), which drop off the ribosome during protein synthesis, or as a result of ribosome stalling. Catalyzes the release of premature peptidyl moieties from peptidyl-tRNA molecules trapped in stalled 50S ribosomal subunits, and thus maintains levels of free tRNAs and 50S ribosomes. The sequence is that of Peptidyl-tRNA hydrolase from Leptospira borgpetersenii serovar Hardjo-bovis (strain JB197).